A 595-amino-acid chain; its full sequence is Probable translation initiation factor IF-2 (595 aa).

Residues 11 to 225 (LRTPIVAVLG…ILVGLAQRYL (215 aa)) form the tr-type G domain. Positions 20 to 27 (GHVDHGKT) are G1. 20–27 (GHVDHGKT) lines the GTP pocket. Residues 45-49 (GITQH) form a G2 region. A G3 region spans residues 81–84 (DTPG). Residues 81–85 (DTPGH) and 135–138 (NKID) each bind GTP. A G4 region spans residues 135–138 (NKID). The tract at residues 203–205 (SAL) is G5.

This sequence belongs to the TRAFAC class translation factor GTPase superfamily. Classic translation factor GTPase family. IF-2 subfamily.

Functionally, function in general translation initiation by promoting the binding of the formylmethionine-tRNA to ribosomes. Seems to function along with eIF-2. The protein is Probable translation initiation factor IF-2 (infB) of Archaeoglobus fulgidus (strain ATCC 49558 / DSM 4304 / JCM 9628 / NBRC 100126 / VC-16).